Reading from the N-terminus, the 60-residue chain is MRLHHLLLALLFLVLSAGSGISGPLSCRRNGGVCIPIRCPGPMRQIGTCFGRPVKCCRSW.

Residues 1–22 form the signal peptide; the sequence is MRLHHLLLALLFLVLSAGSGIS. Cystine bridges form between cysteine 27–cysteine 56, cysteine 34–cysteine 49, and cysteine 39–cysteine 57.

The protein belongs to the beta-defensin family. In terms of tissue distribution, neutrophilic granules.

It localises to the secreted. Has bactericidal activity. Active against E.coli ML35 and S.aureus 502A. In Bos taurus (Bovine), this protein is Beta-defensin 11 (DEFB11).